The primary structure comprises 367 residues: C-C chemokine receptor type 6 (367 aa).

Residues 1–39 (MNSTESYFGTDDYDNTEYYSIPPDHGPCSLEEVRNFTKV) are Extracellular-facing. N-linked (GlcNAc...) asparagine glycans are attached at residues N2 and N35. The helical transmembrane segment at 40-66 (FVPIAYSLICVFGLLGNIMVVMTFAFY) threads the bilayer. The Cytoplasmic segment spans residues 67–75 (KKARSMTDV). Residues 76-96 (YLLNMAITDILFVLTLPFWAV) traverse the membrane as a helical segment. Residues 97–111 (THATNTWVFSDALCK) lie on the Extracellular side of the membrane. C110 and C189 are oxidised to a cystine. The helical transmembrane segment at 112–133 (LMKGTYAVNFNCGMLLLACISM) threads the bilayer. Over 134-151 (DRYIAIVQATKSFRVRSR) the chain is Cytoplasmic. The helical transmembrane segment at 152 to 172 (TLTHSKVICVAVWFISIIISS) threads the bilayer. Topologically, residues 173-203 (PTFIFNKKYELQDRDVCEPRYRSVSEPITWK) are extracellular. A helical transmembrane segment spans residues 204–230 (LLGMGLELFFGFFTPLLFMVFCYLFII). At 231 to 246 (KTLVQAQNSKRHRAIR) the chain is on the cytoplasmic side. The helical transmembrane segment at 247–271 (VVIAVVLVFLACQIPHNMVLLVTAV) threads the bilayer. Topologically, residues 272–295 (NTGKVGRSCSTEKVLAYTRNVAEV) are extracellular. A helical membrane pass occupies residues 296-313 (LAFLHCCLNPVLYAFIGQ). The Cytoplasmic portion of the chain corresponds to 314–367 (KFRNYFMKIMKDVWCMRRKNKMPGFLCARVYSESYISRQTSETVENDNASSFTM).

It belongs to the G-protein coupled receptor 1 family. As to expression, sperm. Mainly localized in the principal piece and neck region of the tail but is also found in the acrosomal region in a small percentage of sperm cells. Expressed in natural regulatory T cells (nTregs) and a subset of early thymocyte progenitor double-negative 1 (DN1) cells. Expressed in memory B cells. Expressed by IL17 producing helper T-cells (Th17), type 1 effector cells (Th1), type 2 effector cells (Th2) and regulatory T-cells (Treg) (at protein level). Expressed by Th17 cells in spleen, Peyers patches, and lamina propria of small and large intestine. Highly expressed in testis, lung, colon, and dendritic cells.

It localises to the cell membrane. The protein resides in the cell surface. Receptor for the C-C type chemokine CCL20. Binds to CCL20 and subsequently transduces a signal by increasing the intracellular calcium ion levels. Although CCL20 is its major ligand it can also act as a receptor for non-chemokine ligands such as beta-defensins. Binds to defensin DEFB1 leading to increase in intracellular calcium ions and cAMP levels. Its binding to DEFB1 is essential for the function of DEFB1 in regulating sperm motility and bactericidal activity. Binds to defensins DEFB4 and DEFB4A/B and mediates their chemotactic effects. The ligand-receptor pair CCL20-CCR6 is responsible for the chemotaxis of dendritic cells (DC), effector/memory T-cells and B-cells and plays an important role at skin and mucosal surfaces under homeostatic and inflammatory conditions, as well as in pathology, including cancer and various autoimmune diseases. CCR6-mediated signals are essential for immune responses to microbes in the intestinal mucosa and in the modulation of inflammatory responses initiated by tissue insult and trauma. CCR6 is essential for the recruitment of both the pro-inflammatory IL17 producing helper T-cells (Th17) and the regulatory T-cells (Treg) to sites of inflammation. Required for the normal migration of Th17 cells in Peyers patches and other related tissue sites of the intestine and plays a role in regulating effector T-cell balance and distribution in inflamed intestine. Plays an important role in the coordination of early thymocyte precursor migration events important for normal subsequent thymocyte precursor development, but is not required for the formation of normal thymic natural regulatory T-cells (nTregs). Required for optimal differentiation of DN2 and DN3 thymocyte precursors. Essential for B-cell localization in the subepithelial dome of Peyers-patches and for efficient B-cell isotype switching to IgA in the Peyers-patches. Essential for appropriate anatomical distribution of memory B-cells in the spleen and for the secondary recall response of memory B-cells. Positively regulates sperm motility and chemotaxis via its binding to CCL20. In Mus musculus (Mouse), this protein is C-C chemokine receptor type 6 (Ccr6).